Reading from the N-terminus, the 204-residue chain is uncharacterized protein (204 aa).

This is an uncharacterized protein from Saccharomyces cerevisiae (strain ATCC 204508 / S288c) (Baker's yeast).